We begin with the raw amino-acid sequence, 262 residues long: Putative ankyrin repeat protein R848 (262 aa).

7 ANK repeats span residues 8 to 37 (SNDY…NVTH), 38 to 67 (DNNY…DIRD), 68 to 97 (CRDY…NIRA), 99 to 127 (DDYA…NFRA), 128 to 157 (DNDY…DIRA), 159 to 187 (DDYA…DFRS), and 189 to 217 (NNAS…DVNT).

The chain is Putative ankyrin repeat protein R848 from Acanthamoeba polyphaga (Amoeba).